Consider the following 399-residue polypeptide: MAAVRLKEVRMAQRAEGLATVLAIGTAVPANCVYQATYPDYYFRVTKSEHLADLKEKFQRMCDKSMIRKRHMHLTEEILIKNPKICAHMETSLDARHAIALVEVPKLGQGAAEKAIKEWGQPLSKITHLVFCTTSGVDMPGADYQLTKLLGLSPTVKRLMMYQQGCFGGATVLRLAKDIAENNRGARVLVVCSEITAMAFRGPCKSHLDSLVGHALFGDGAAAAIIGADPDQLDEQPVFQLVSASQTILPESEGAIDGHLTEAGLTIHLLKDVPGLISENIEQALEDAFEPLGIHNWNSIFWIAHPGGPAILDRVEDRVGLDKKRMRASREVLSEYGNMSSASVLFVLDVMRKSSAKDGLATTGEGKDWGVLFGFGPGLTVETLVLHSVPVPVPTAASA.

Cys166 is a catalytic residue.

It belongs to the thiolase-like superfamily. Chalcone/stilbene synthases family.

It catalyses the reaction (E)-4-coumaroyl-CoA + 3 malonyl-CoA + 3 H(+) = 2',4,4',6'-tetrahydroxychalcone + 3 CO2 + 4 CoA. It functions in the pathway secondary metabolite biosynthesis; flavonoid biosynthesis. In terms of biological role, the primary product of this enzyme is 4,2',4',6'-tetrahydroxychalcone (also termed naringenin-chalcone or chalcone) which can under specific conditions spontaneously isomerize into naringenin. Substrate preference is feruloyl-CoA = caffeoyl-CoA &gt;&gt; cinnamoyl-CoA. The chain is Chalcone synthase 2 (CHS2) from Hordeum vulgare (Barley).